Consider the following 456-residue polypeptide: UDP-N-acetylglucosamine 1-carboxyvinyltransferase (456 aa).

Residue 34–35 coordinates phosphoenolpyruvate; sequence KN. R104 is a binding site for UDP-N-acetyl-alpha-D-glucosamine. Residue C128 is the Proton donor of the active site. A 2-(S-cysteinyl)pyruvic acid O-phosphothioketal modification is found at C128. UDP-N-acetyl-alpha-D-glucosamine contacts are provided by D319 and I341.

Belongs to the EPSP synthase family. MurA subfamily.

The protein localises to the cytoplasm. The catalysed reaction is phosphoenolpyruvate + UDP-N-acetyl-alpha-D-glucosamine = UDP-N-acetyl-3-O-(1-carboxyvinyl)-alpha-D-glucosamine + phosphate. It participates in cell wall biogenesis; peptidoglycan biosynthesis. Cell wall formation. Adds enolpyruvyl to UDP-N-acetylglucosamine. The protein is UDP-N-acetylglucosamine 1-carboxyvinyltransferase of Prochlorococcus marinus (strain AS9601).